Here is a 273-residue protein sequence, read N- to C-terminus: Dermonecrotic toxin LhSicTox-alphaIA1iii (273 aa).

Residue histidine 5 is part of the active site. Residues glutamate 25 and aspartate 27 each contribute to the Mg(2+) site. Residue histidine 41 is the Nucleophile of the active site. Disulfide bonds link cysteine 45-cysteine 51 and cysteine 47-cysteine 190. Residue aspartate 85 coordinates Mg(2+).

This sequence belongs to the arthropod phospholipase D family. Class II subfamily. The cofactor is Mg(2+). As to expression, expressed by the venom gland.

It localises to the secreted. The catalysed reaction is an N-(acyl)-sphingosylphosphocholine = an N-(acyl)-sphingosyl-1,3-cyclic phosphate + choline. The enzyme catalyses an N-(acyl)-sphingosylphosphoethanolamine = an N-(acyl)-sphingosyl-1,3-cyclic phosphate + ethanolamine. It catalyses the reaction a 1-acyl-sn-glycero-3-phosphocholine = a 1-acyl-sn-glycero-2,3-cyclic phosphate + choline. It carries out the reaction a 1-acyl-sn-glycero-3-phosphoethanolamine = a 1-acyl-sn-glycero-2,3-cyclic phosphate + ethanolamine. Functionally, dermonecrotic toxins cleave the phosphodiester linkage between the phosphate and headgroup of certain phospholipids (sphingolipid and lysolipid substrates), forming an alcohol (often choline) and a cyclic phosphate. This toxin acts on sphingomyelin (SM). It may also act on ceramide phosphoethanolamine (CPE), lysophosphatidylcholine (LPC) and lysophosphatidylethanolamine (LPE), but not on lysophosphatidylserine (LPS), and lysophosphatidylglycerol (LPG). It acts by transphosphatidylation, releasing exclusively cyclic phosphate products as second products. Induces dermonecrosis, hemolysis, increased vascular permeability, edema, inflammatory response, and platelet aggregation. The polypeptide is Dermonecrotic toxin LhSicTox-alphaIA1iii (Loxosceles hirsuta (Recluse spider)).